Reading from the N-terminus, the 560-residue chain is MASDNVASFRWTQALRRGLSNWTNPVKSDVITDTRALLAALDFDRVAQVQRLMRKDKRTDTDLTKLRDLNKEVDALMNMRTTQKDNVLRVGGLSKDELMELASDLQKLKKKVLRVEGSGQPGVYAGNLTTTQLEQRSKILRDMGFAQLRGNPSGVVKVWDIKDSSLLINQFGSMPAVTMACMTEQGGESLNDVVQGLSALGLLYTVKYPNMSDLEKLADQYPCLGYITQEQSQINVSGYNLSLSAAVKAGACMLDGGNMLETIQVKPTMFSSMIKAVLEVKSKERMFVSEAPGQRNPYENLLYKLCLSGDGWPYIGSRSQVKGRAWDNTTVDLTDTGSPNHPPVRNGGSPRLSQLSHAKEEQILEGLKRLDSKATTWIDIEGTPNDPVELAIFQPESGNYIHCYREPHDVKSFKDQSKYSHGMLLKDLTNTQPGLISFIIKNLPAGIVLTAQGSDDIEKLLEMHARRDISIIDVRLTSEQARQFEDKVWDKFGILCNKHKGIVLARKKKGSPPGSKNPHCALLDCIMFCSTIGGFVDDKKPTRLLPLDLLYREQASLIEL.

A binding site for the cap structure m7GTP region spans residues 53 to 236 (MRKDKRTDTD…ITQEQSQINV (184 aa)). Residues 333–353 (LTDTGSPNHPPVRNGGSPRLS) are disordered. Aspartate 379 and glutamate 381 together coordinate Mn(2+). Zn(2+)-binding residues include glutamate 389, cysteine 496, histidine 499, and cysteine 520. Aspartate 524 contacts Mn(2+).

This sequence belongs to the arenaviridae nucleocapsid protein family. Homomultimerizes to form the nucleocapsid. Binds to viral genomic RNA. Interacts with glycoprotein G2. Interacts with protein Z; this interaction probably directs the encapsidated genome to budding sites. Interacts with protein L; this interaction does not interfere with Z-L interaction. Interacts with host IKBKE (via Protein kinase domain); the interaction inhibits IKBKE kinase activity.

It localises to the virion. Its subcellular location is the host cytoplasm. In terms of biological role, encapsidates the genome, protecting it from nucleases. The encapsidated genomic RNA is termed the nucleocapsid (NC). Serves as template for viral transcription and replication. The increased presence of protein N in host cell does not seem to trigger the switch from transcription to replication as observed in other negative strain RNA viruses. Through the interaction with host IKBKE, strongly inhibits the phosphorylation and nuclear translocation of host IRF3, a protein involved in interferon activation pathway, leading to the inhibition of interferon-beta and IRF3-dependent promoters activation. Also encodes a functional 3'-5' exoribonuclease that degrades preferentially dsRNA substrates and thereby participates in the suppression of interferon induction. This is Nucleoprotein from Pirital mammarenavirus (isolate Rat/Venezuela/VAV-488/1995) (PIRV).